The sequence spans 400 residues: Large envelope protein (400 aa).

M1 carries the N-acetylmethionine modification. The N-myristoyl glycine; by host moiety is linked to residue G2. Residues 2–119 (GAPLSTARRG…PPLRDTHPQA (118 aa)) are pre-S1. The pre-S stretch occupies residues 2–174 (GAPLSTARRG…FSKTGDPAMN (173 aa)). The Virion surface; in external conformation portion of the chain corresponds to 2–181 (GAPLSTARRG…AMNMENITSG (180 aa)). The Intravirion; in internal conformation portion of the chain corresponds to 2-253 (GAPLSTARRG…PGYRWMCLRR (252 aa)). N-linked (GlcNAc...) asparagine glycosylation occurs at P4. The tract at residues 70–115 (PHGGLLGWSPQAQGILTTSPPDPPPASTNRRSGRKPTPVSPPLRDT) is disordered. Positions 79–88 (PQAQGILTTS) are enriched in polar residues. Residues 120–174 (MQWNSTQFHQALLDPRVRGLYFPAGGSSSETQNPAPTIASLTSSIFSKTGDPAMN) are pre-S2. A helical membrane pass occupies residues 182-202 (LLRPLLVLQAVCFLLTKILTI). The Intravirion; in external conformation segment spans residues 203–253 (PQSLDSWWTSLNFLGVPPGCPGQNSQSPISNHLPTSCPPTCPGYRWMCLRR). Residues 254–274 (FIIFLFILLLCLIFLLVLLDY) form a helical membrane-spanning segment. Over 275–348 (QGMLPVCPLL…WASARFSWLS (74 aa)) the chain is Virion surface. N-linked (GlcNAc...) asparagine; by host glycosylation is present at N320. The helical transmembrane segment at 349 to 369 (LLVQFVQWCVGLSPTVWLLVI) threads the bilayer. Residues 370-375 (WMIWYW) lie on the Intravirion side of the membrane. A helical transmembrane segment spans residues 376-398 (GPNLCSILSPFIPLLPIFCYLWA). The Virion surface segment spans residues 399 to 400 (SI).

The protein belongs to the orthohepadnavirus major surface antigen family. In terms of assembly, in its internal form (Li-HBsAg), interacts with the capsid protein and with the isoform S. Interacts with host chaperone CANX. As to quaternary structure, associates with host chaperone CANX through its pre-S2 N glycan; this association may be essential for isoform M proper secretion. Interacts with isoform L. Interacts with the antigens of satellite virus HDV (HDVAgs); this interaction is required for encapsidation of HDV genomic RNA. Post-translationally, isoform M is N-terminally acetylated by host at a ratio of 90%, and N-glycosylated by host at the pre-S2 region. In terms of processing, myristoylated.

The protein resides in the virion membrane. Functionally, the large envelope protein exists in two topological conformations, one which is termed 'external' or Le-HBsAg and the other 'internal' or Li-HBsAg. In its external conformation the protein attaches the virus to cell receptors and thereby initiating infection. This interaction determines the species specificity and liver tropism. This attachment induces virion internalization predominantly through caveolin-mediated endocytosis. The large envelope protein also assures fusion between virion membrane and endosomal membrane. In its internal conformation the protein plays a role in virion morphogenesis and mediates the contact with the nucleocapsid like a matrix protein. The middle envelope protein plays an important role in the budding of the virion. It is involved in the induction of budding in a nucleocapsid independent way. In this process the majority of envelope proteins bud to form subviral lipoprotein particles of 22 nm of diameter that do not contain a nucleocapsid. This is Large envelope protein from Hepatitis B virus genotype H (isolate United States/LAS2523/2002) (HBV-H).